The chain runs to 255 residues: Malonyl-[acyl-carrier protein] O-methyltransferase (255 aa).

The protein belongs to the methyltransferase superfamily.

It catalyses the reaction malonyl-[ACP] + S-adenosyl-L-methionine = malonyl-[ACP] methyl ester + S-adenosyl-L-homocysteine. The protein operates within cofactor biosynthesis; biotin biosynthesis. Converts the free carboxyl group of a malonyl-thioester to its methyl ester by transfer of a methyl group from S-adenosyl-L-methionine (SAM). It allows to synthesize pimeloyl-ACP via the fatty acid synthetic pathway. This Serratia marcescens protein is Malonyl-[acyl-carrier protein] O-methyltransferase.